The sequence spans 760 residues: Serine/threonine-protein kinase PknG (760 aa).

The interval 1–31 (MTSPENPDLPDADDAYVDSGPGTQPASLEDL) is disordered. Residues 161–403 (YEIKGCIAHG…SAEEMSSQLL (243 aa)) form the Protein kinase domain. Residues 167–175 (IAHGGLGWV) and Lys191 contribute to the ATP site. The active-site Proton acceptor is the Asp286.

This sequence belongs to the protein kinase superfamily. Ser/Thr protein kinase family. Interacts with GarA in vitro.

The catalysed reaction is L-seryl-[protein] + ATP = O-phospho-L-seryl-[protein] + ADP + H(+). It carries out the reaction L-threonyl-[protein] + ATP = O-phospho-L-threonyl-[protein] + ADP + H(+). The protein is Serine/threonine-protein kinase PknG (pknG) of Mycolicibacterium smegmatis (strain ATCC 700084 / mc(2)155) (Mycobacterium smegmatis).